Reading from the N-terminus, the 202-residue chain is Glycolipid transfer protein 1 (202 aa).

4 residues coordinate a ganglioside GM3 (d18:1(4E)): Asp52, Asn56, Trp99, and His138.

Belongs to the GLTP family.

Functionally, may be involved in glycolipids transfer. This is Glycolipid transfer protein 1 from Arabidopsis thaliana (Mouse-ear cress).